A 102-amino-acid chain; its full sequence is NADH-quinone oxidoreductase subunit K 2 (102 aa).

The next 3 helical transmembrane spans lie at 1-21, 30-50, and 65-85; these read MIVPLLHILILAGILFVLGLV, IIMMLIGIEIMLNAAMLAFVG, and LMIMAMTSAEVSLALALVVYL.

It belongs to the complex I subunit 4L family. NDH-1 is composed of 14 different subunits. Subunits NuoA, H, J, K, L, M, N constitute the membrane sector of the complex.

The protein resides in the cell inner membrane. The catalysed reaction is a quinone + NADH + 5 H(+)(in) = a quinol + NAD(+) + 4 H(+)(out). Its function is as follows. NDH-1 shuttles electrons from NADH, via FMN and iron-sulfur (Fe-S) centers, to quinones in the respiratory chain. The immediate electron acceptor for the enzyme in this species is believed to be ubiquinone. Couples the redox reaction to proton translocation (for every two electrons transferred, four hydrogen ions are translocated across the cytoplasmic membrane), and thus conserves the redox energy in a proton gradient. The chain is NADH-quinone oxidoreductase subunit K 2 from Geotalea daltonii (strain DSM 22248 / JCM 15807 / FRC-32) (Geobacter daltonii).